The chain runs to 381 residues: Cytochrome b (381 aa).

Transmembrane regions (helical) follow at residues 34–54, 78–99, 114–134, and 179–199; these read FGSLLGLCLIIQIVTGLFLAM, WLIRNIHANGASLFFVCIYFHI, WNIGVILLFLLMATAFVGYVL, and FFAFHFLLPFLITALMIIHVL. Residues H84 and H98 each coordinate heme b. Residues H183 and H197 each coordinate heme b. Residue H202 coordinates a ubiquinone. A run of 4 helical transmembrane segments spans residues 227 to 247, 289 to 309, 321 to 341, and 348 to 368; these read YKDALGFLTLLILLGVLALFL, LGGVLALLFSILILMLVPFLH, LTQIFFWTLVTNMLILTWIGG, and FILIGQIASISYFSLFLIALP.

The protein belongs to the cytochrome b family. As to quaternary structure, the cytochrome bc1 complex contains 3 respiratory subunits (MT-CYB, CYC1 and UQCRFS1), 2 core proteins (UQCRC1 and UQCRC2) and probably 6 low-molecular weight proteins. Requires heme b as cofactor.

The protein resides in the mitochondrion inner membrane. In terms of biological role, component of the ubiquinol-cytochrome c reductase complex (complex III or cytochrome b-c1 complex) that is part of the mitochondrial respiratory chain. The b-c1 complex mediates electron transfer from ubiquinol to cytochrome c. Contributes to the generation of a proton gradient across the mitochondrial membrane that is then used for ATP synthesis. This chain is Cytochrome b (mt-cyb), found in Isurus oxyrinchus (Shortfin mako shark).